The chain runs to 438 residues: Malic acid transport protein (438 aa).

The next 10 helical transmembrane spans lie at serine 37 to phenylalanine 57, isoleucine 65 to leucine 85, leucine 106 to alanine 126, isoleucine 140 to isoleucine 160, serine 172 to valine 192, valine 205 to valine 225, proline 242 to alanine 262, phenylalanine 288 to phenylalanine 308, alanine 321 to isoleucine 341, and phenylalanine 353 to valine 373. Positions alanine 390–valine 438 are disordered. Residues serine 413, serine 423, serine 428, serine 432, serine 433, and serine 437 each carry the phosphoserine modification.

Belongs to the tellurite-resistance/dicarboxylate transporter (TDT) family.

It localises to the membrane. In terms of biological role, permease for malate and other C4 dicarboxylic acids. The protein is Malic acid transport protein (mae1) of Schizosaccharomyces pombe (strain 972 / ATCC 24843) (Fission yeast).